Here is a 316-residue protein sequence, read N- to C-terminus: Phospholipase A1 2 (316 aa).

An N-terminal signal peptide occupies residues 1 to 4 (ADDL). Positions 5–14 (TTLRNGTLDR) are excised as a propeptide. A disulfide bridge connects residues Cys20 and Cys103. Residue Ser153 is the Nucleophile of the active site. Asp181 acts as the Charge relay system in catalysis. 2 disulfide bridges follow: Cys192–Cys197 and Cys235–Cys240. His242 acts as the Charge relay system in catalysis. Disulfide bonds link Cys257-Cys284, Cys258-Cys309, and Cys277-Cys282.

It belongs to the AB hydrolase superfamily. Lipase family. As to expression, expressed by the venom gland.

Its subcellular location is the secreted. The enzyme catalyses a 1,2-diacyl-sn-glycero-3-phosphocholine + H2O = a 2-acyl-sn-glycero-3-phosphocholine + a fatty acid + H(+). Its function is as follows. Catalyzes the hydrolysis of phosphatidylcholine with phospholipase A1 activity. May act as an allergen and induce hemolytic activity. The sequence is that of Phospholipase A1 2 from Polistes dominula (European paper wasp).